A 541-amino-acid chain; its full sequence is 3-oxoacyl-[acyl-carrier-protein] synthase II, chloroplastic (541 aa).

The N-terminal 103 residues, methionine 1–alanine 103, are a transit peptide targeting the chloroplast. The Ketosynthase family 3 (KS3) domain maps to glutamine 129 to proline 539. Catalysis depends on for beta-ketoacyl synthase activity residues cysteine 292, histidine 432, and histidine 468.

Belongs to the thiolase-like superfamily. Beta-ketoacyl-ACP synthases family. In terms of assembly, homodimer. In terms of tissue distribution, mostly expressed in siliques, and, to a lower extent, in leaves, stems, flower buds, and flowers.

The protein localises to the plastid. It localises to the chloroplast stroma. The catalysed reaction is a fatty acyl-[ACP] + malonyl-[ACP] + H(+) = a 3-oxoacyl-[ACP] + holo-[ACP] + CO2. Its function is as follows. Essential protein that catalyzes the condensation reaction of fatty acid synthesis by the addition to an acyl acceptor of two carbons from malonyl-ACP. Specific for elongation from C-16 and C-16 to unsaturated C-18 fatty acids. Confers resistance to low temperatures by maintaining chloroplast membranes integrity. Involved in the regulation of fatty acids ratios during seed metabolism. Required for embryo development, especially at the transition from the globular to the heart stage. This chain is 3-oxoacyl-[acyl-carrier-protein] synthase II, chloroplastic (KAS2), found in Arabidopsis thaliana (Mouse-ear cress).